Consider the following 311-residue polypeptide: Mitochondrial arginine transporter BAC1 (311 aa).

3 Solcar repeats span residues 12–101 (FGFY…AKLF), 111–203 (PRPE…LRYH), and 219–305 (VDMG…SMKM). 6 helical membrane passes run 18–38 (YVAG…FDTV), 76–96 (GATS…GIYS), 113–133 (PEII…VLCP), 178–197 (GGSA…FTVY), 222–242 (GIGV…VLPF), and 288–308 (AFPA…MLGI).

This sequence belongs to the mitochondrial carrier (TC 2.A.29) family. High expression in flowers and siliques. Lower expression in leaves and stems.

The protein localises to the mitochondrion inner membrane. Inhibited by mercuric chloride. Mitochondrial arginine transporter that catalyzes the counter-exchange of arginine with lysine, ornithine, arginine and histidine. Substrate preference in reconstituted proteoliposomes is arginine &gt; lysine &gt; ornithine &gt; histidine. May be involved in the delivery of arginine, released from seed reserves, to mitochondrial arginase and the export of ornithine. This is Mitochondrial arginine transporter BAC1 (BAC1) from Arabidopsis thaliana (Mouse-ear cress).